The primary structure comprises 551 residues: MKRKMKMKLVRFGLAAGLAAQVFFLPYNALASTEHVTWNQQFQTPQFISGDLLKVNGTSPEELVYQYVEKNENKFKFHENAKDTLQLKEKKNDNLGFTFMRFQQTYKGIPVFGAVVTAHVKDGTLTALSGTLIPNLDTKGSLKSGKKLSEKQARDIAEKDLVANVTKEVPEYEQGKDTEFVVYVNGDEASLAYVVNLNFLTPEPGNWLYIIDAVDGKILNKFNQLDAAKPGDVKSITGTSTVGVGRGVLGDQKNINTTYSTYYYLQDNTRGNGIFTYDAKYRTTLPGSLWADADNQFFASYDAPAVDAHYYAGVTYDYYKNVHNRLSYDGNNAAIRSSVHYSQGYNNAFWNGSQMVYGDGDGQTFIPLSGGIDVVAHELTHAVTDYTAGLIYQNESGAINEAISDIFGTLVEFYANKNPDWEIGEDVYTPGISGDSLRSMSDPAKYGDPDHYSKRYTGTQDNGGVHINSGIINKAAYLISQGGTHYGVSVVGIGRDKLGKIFYRALTQYLTPTSNFSQLRAAAVQSATDLYGSTSQEVASVKQAFDAVGVK.

Residues 1-31 form the signal peptide; it reads MKRKMKMKLVRFGLAAGLAAQVFFLPYNALA. A propeptide spans 32-235 (activation peptide); sequence STEHVTWNQQ…DAAKPGDVKS (204 aa). Ca(2+) contacts are provided by Asp292, Asp294, Gln296, and Asp373. His377 is a binding site for Zn(2+). The active site involves Glu378. Residues His381 and Glu401 each contribute to the Zn(2+) site. The Ca(2+) site is built by Glu412, Asn418, Asp420, Glu422, Glu425, Thr429, Ile432, and Asp435. The active-site Proton donor is His466.

It belongs to the peptidase M4 family. Ca(2+) is required as a cofactor. It depends on Zn(2+) as a cofactor.

The protein resides in the secreted. The catalysed reaction is Preferential cleavage: Xaa-|-Leu &gt; Xaa-|-Phe.. In terms of biological role, extracellular zinc metalloprotease. The sequence is that of Thermolysin (nprS) from Geobacillus stearothermophilus (Bacillus stearothermophilus).